The chain runs to 205 residues: uncharacterized protein (205 aa).

The signal sequence occupies residues 1–18 (MKASLALLSLLTAFTSHS).

This is an uncharacterized protein from Escherichia coli (strain K12).